Consider the following 159-residue polypeptide: Protein-export protein SecB (159 aa).

Belongs to the SecB family. In terms of assembly, homotetramer, a dimer of dimers. One homotetramer interacts with 1 SecA dimer.

Its subcellular location is the cytoplasm. Its function is as follows. One of the proteins required for the normal export of preproteins out of the cell cytoplasm. It is a molecular chaperone that binds to a subset of precursor proteins, maintaining them in a translocation-competent state. It also specifically binds to its receptor SecA. The polypeptide is Protein-export protein SecB (Aromatoleum aromaticum (strain DSM 19018 / LMG 30748 / EbN1) (Azoarcus sp. (strain EbN1))).